Consider the following 76-residue polypeptide: Acyl carrier protein (76 aa).

In terms of domain architecture, Carrier spans 1–76 (MSIEERVKKI…SAIDYVQNNQ (76 aa)). The residue at position 36 (Ser-36) is an O-(pantetheine 4'-phosphoryl)serine.

It belongs to the acyl carrier protein (ACP) family. In terms of processing, 4'-phosphopantetheine is transferred from CoA to a specific serine of apo-ACP by AcpS. This modification is essential for activity because fatty acids are bound in thioester linkage to the sulfhydryl of the prosthetic group.

It is found in the cytoplasm. Its pathway is lipid metabolism; fatty acid biosynthesis. Carrier of the growing fatty acid chain in fatty acid biosynthesis. This chain is Acyl carrier protein, found in Pasteurella multocida (strain Pm70).